The chain runs to 857 residues: Leucine-rich repeat extensin-like protein 5 (857 aa).

The first 31 residues, 1–31, serve as a signal peptide directing secretion; sequence MKTKMMMKNTSLIFVLLFITFFFTSISYSLS. The LRR 1 repeat unit spans residues 32–53; it reads LTFNGDLSDNEVRLITQRQLLY. A glycan (N-linked (GlcNAc...) asparagine) is linked at Asn98. LRR repeat units follow at residues 125–149, 150–172, 174–197, 198–221, 223–244, 246–267, 268–291, 292–315, 316–339, and 341–362; these read IRTV…LGLL, TDLA…RFNR, KLLF…VLQL, PSLK…LFSK, LDAI…LGDS, VSVI…LGDM, RNLE…IGRL, KNVT…IGGM, VSME…ICQL, and RLEN…CLGL. N-linked (GlcNAc...) asparagine glycosylation is present at Asn293. N-linked (GlcNAc...) asparagine glycosylation occurs at Asn344. Disordered regions lie at residues 406–776 and 817–839; these read PPVV…EYSP and YSPP…YEGP. Pro residues-rich tracts occupy residues 408 to 571 and 579 to 768; these read VVVP…PTPI and PIIP…PQSH. Positions 615–857 are contains the Ser-Pro(4) repeats; it reads SPPPSTPTPV…YASPPPPPFY (243 aa).

Hydroxylated on proline residues in the S-P-P-P-P repeat. In terms of processing, O-glycosylated on hydroxyprolines. Expressed in roots, leaves and flowers.

It is found in the secreted. The protein localises to the cell wall. Modulates cell morphogenesis by regulating cell wall formation and assembly, and/or growth polarization. This chain is Leucine-rich repeat extensin-like protein 5 (LRX5), found in Arabidopsis thaliana (Mouse-ear cress).